Here is a 257-residue protein sequence, read N- to C-terminus: Large ribosomal subunit protein bL28m (257 aa).

The N-terminal 55 residues, 1-55 (MPLHRYPVHLWQKLRLRQGICARLPAHFLRSLEEERTPTPVHYKPHGTKFKINPK), are a transit peptide targeting the mitochondrion.

This sequence belongs to the bacterial ribosomal protein bL28 family. In terms of assembly, component of the mitochondrial ribosome large subunit (39S) which comprises a 16S rRNA and about 50 distinct proteins. Interacts with OXA1L.

It localises to the mitochondrion. This is Large ribosomal subunit protein bL28m (Mrpl28) from Mus musculus (Mouse).